We begin with the raw amino-acid sequence, 289 residues long: D-alanine aminotransferase (289 aa).

Tyr31 is a binding site for substrate. Residue Arg50 coordinates pyridoxal 5'-phosphate. Substrate-binding residues include Arg99 and His101. Lys147 acts as the Proton acceptor in catalysis. An N6-(pyridoxal phosphate)lysine modification is found at Lys147. Residue Glu179 participates in pyridoxal 5'-phosphate binding.

The protein belongs to the class-IV pyridoxal-phosphate-dependent aminotransferase family. As to quaternary structure, homodimer. Pyridoxal 5'-phosphate is required as a cofactor.

It catalyses the reaction D-alanine + 2-oxoglutarate = D-glutamate + pyruvate. In terms of biological role, acts on the D-isomers of alanine, leucine, aspartate, glutamate, aminobutyrate, norvaline and asparagine. The enzyme transfers an amino group from a substrate D-amino acid to the pyridoxal phosphate cofactor to form pyridoxamine and an alpha-keto acid in the first half-reaction. The second half-reaction is the reverse of the first, transferring the amino group from the pyridoxamine to a second alpha-keto acid to form the product D-amino acid via a ping-pong mechanism. This is an important process in the formation of D-alanine and D-glutamate, which are essential bacterial cell wall components. The sequence is that of D-alanine aminotransferase (dat) from Listeria monocytogenes serotype 4b (strain F2365).